Consider the following 192-residue polypeptide: Iodate reductase subunit IdrB (192 aa).

The tat-type signal signal peptide spans 1-52 (MSENIIPVRAVPAHDHEHDGERACMSRRRFLLFGGTSVALLSIASLPGVAQV). The Rieske domain occupies 102–173 (GADKDIVAFN…LEVQGDDIYA (72 aa)). Residues Cys114, His116, Cys135, and His138 each contribute to the [2Fe-2S] cluster site.

Belongs to the AOX family. As to quaternary structure, the iodate reductase (Idr) complex is composed of a molybdopterin-dependent iodate reductase (IdrA and IdrB subunits) and two associated peroxidases (IdrP1 and IdrP2). It depends on [2Fe-2S] cluster as a cofactor. Post-translationally, predicted to be exported by the Tat system. The position of the signal peptide cleavage has not been experimentally proven.

The protein localises to the periplasm. Involved in iodate respiration. Probably catalyzes the reduction of iodate (IO(3)(-)) to hypoiodous acid (HIO) and H(2)O(2), using a reduced cytochrome c as the electron donor. The chain is Iodate reductase subunit IdrB from Pseudomonas sp. (strain SCT).